A 373-amino-acid polypeptide reads, in one-letter code: Histidinol-phosphate aminotransferase (373 aa).

An N6-(pyridoxal phosphate)lysine modification is found at Lys-229.

The protein belongs to the class-II pyridoxal-phosphate-dependent aminotransferase family. Histidinol-phosphate aminotransferase subfamily. Pyridoxal 5'-phosphate is required as a cofactor.

The catalysed reaction is L-histidinol phosphate + 2-oxoglutarate = 3-(imidazol-4-yl)-2-oxopropyl phosphate + L-glutamate. It functions in the pathway amino-acid biosynthesis; L-histidine biosynthesis; L-histidine from 5-phospho-alpha-D-ribose 1-diphosphate: step 7/9. The polypeptide is Histidinol-phosphate aminotransferase (hisC) (Methanothermobacter thermautotrophicus (strain ATCC 29096 / DSM 1053 / JCM 10044 / NBRC 100330 / Delta H) (Methanobacterium thermoautotrophicum)).